The sequence spans 165 residues: MQAETILEGLEAGLPQAVSSGLSLVPAPGLVLTCLSAPSGPGGMALEPPPTTLRKAFLAQSTLLESTLEGAPEWAAPHPEEQRRSPPACSQHTPPLPSTPTGPPPCSPGGNHPLCALSGRGGGRCSIPSLSSSSTFSLFSSGCWNPRVKLRVRKSQSQGRAGQLI.

Residues 68 to 107 (LEGAPEWAAPHPEEQRRSPPACSQHTPPLPSTPTGPPPCS) are disordered. The segment covering 94–107 (PPLPSTPTGPPPCS) has biased composition (pro residues).

This is an uncharacterized protein from Homo sapiens (Human).